A 215-amino-acid polypeptide reads, in one-letter code: ATP-dependent dethiobiotin synthetase BioD (215 aa).

Residue 13–18 coordinates ATP; it reads DIGKTV. A Mg(2+)-binding site is contributed by threonine 17. The active site involves lysine 38. Threonine 42 lines the substrate pocket. Residues aspartate 50, 115–118, and 175–176 contribute to the ATP site; these read EGAG and NH. 2 residues coordinate Mg(2+): aspartate 50 and glutamate 115.

Belongs to the dethiobiotin synthetase family. As to quaternary structure, homodimer. It depends on Mg(2+) as a cofactor.

The protein localises to the cytoplasm. The enzyme catalyses (7R,8S)-7,8-diammoniononanoate + CO2 + ATP = (4R,5S)-dethiobiotin + ADP + phosphate + 3 H(+). The protein operates within cofactor biosynthesis; biotin biosynthesis; biotin from 7,8-diaminononanoate: step 1/2. Functionally, catalyzes a mechanistically unusual reaction, the ATP-dependent insertion of CO2 between the N7 and N8 nitrogen atoms of 7,8-diaminopelargonic acid (DAPA, also called 7,8-diammoniononanoate) to form a ureido ring. The protein is ATP-dependent dethiobiotin synthetase BioD of Neisseria meningitidis serogroup C (strain 053442).